We begin with the raw amino-acid sequence, 312 residues long: Protoheme IX farnesyltransferase (312 aa).

9 consecutive transmembrane segments (helical) span residues 31-51 (LLMKPSVMLLAVFTAITGLFI), 58-78 (PLLSSIAILCISTGAGAAGAI), 107-127 (TALTFGIILAFFSVLVMAICV), 130-150 (ISSILLLISISFYIIVYTMWL), 157-177 (NIVIGGAAGALPPVIGYSAVT), 184-204 (CLMLFLIIFLWTPAHFWTLSL), 229-249 (YSILAYTFLTVISASLPYFTD), 250-270 (IAGLLYLICSTISGIIFLCYA), and 286-306 (FKYSIIYLFNIFLYLIIEHCI).

The protein belongs to the UbiA prenyltransferase family. Protoheme IX farnesyltransferase subfamily.

It is found in the cell inner membrane. It carries out the reaction heme b + (2E,6E)-farnesyl diphosphate + H2O = Fe(II)-heme o + diphosphate. Its pathway is porphyrin-containing compound metabolism; heme O biosynthesis; heme O from protoheme: step 1/1. In terms of biological role, converts heme B (protoheme IX) to heme O by substitution of the vinyl group on carbon 2 of heme B porphyrin ring with a hydroxyethyl farnesyl side group. This chain is Protoheme IX farnesyltransferase, found in Orientia tsutsugamushi (strain Ikeda) (Rickettsia tsutsugamushi).